The sequence spans 263 residues: Auxin-responsive protein IAA3 (263 aa).

Disordered stretches follow at residues 1 to 54 (MSPP…RRPA) and 76 to 121 (RVFP…PAAK). Over residues 28-38 (RADDVDLKGTE) the composition is skewed to basic and acidic residues. The short motif at 39–43 (LRLGL) is the EAR-like (transcriptional repression) element. A PB1 domain is found at 158 to 245 (FLYVKVSMDG…SCRRLRIMKG (88 aa)).

It belongs to the Aux/IAA family. In terms of assembly, homodimers and heterodimers. Highly expressed in flowers. Expressed in roots and shoots.

The protein localises to the nucleus. Aux/IAA proteins are short-lived transcriptional factors that function as repressors of early auxin response genes at low auxin concentrations. The protein is Auxin-responsive protein IAA3 (IAA3) of Oryza sativa subsp. japonica (Rice).